Reading from the N-terminus, the 1419-residue chain is Myosin-2B (1419 aa).

The Myosin N-terminal SH3-like domain occupies 4 to 57; that stretch reads EVGTRCWYPNSEAGWIGCEVTKNDFQDGTYHIELTSETGLVIPIETKHLESNNA. Residues 75–780 enclose the Myosin motor domain; the sequence is EATHDLTTLS…VLAYLEKIRS (706 aa). 169 to 176 lines the ATP pocket; sequence GESGAGKT. Residues 451-531 are actin-binding; sequence FIGVLDIYGF…LGILSLLDEE (81 aa). IQ domains follow at residues 783–805, 806–830, 831–854, 855–878, 879–901, and 902–931; these read VTEL…LYLQ, AMLS…DFEM, KTDA…VFET, LKNI…QREF, ESRS…RYQT, and LKTG…QAES. Residues 909-940 are a coiled coil; that stretch reads IQALVRRKQSQEKLKQLKIQAESAASLKNSAA. Positions 1061–1419 are non alpha-helical, tail domain; the sequence is KDNERTSTSS…VIKELGSLLA (359 aa). The region spanning 1143–1357 is the Dilute domain; sequence HSILKQTVQD…LNHLSNTARR (215 aa).

Belongs to the TRAFAC class myosin-kinesin ATPase superfamily. Myosin family. In terms of assembly, homodimer. Interacts with calmodulin (CMD1) and the myosin light chain MLC1 through its IQ repeats.

Functionally, myosin heavy chain that is required for the cell cycle-regulated transport of various organelles and proteins for their segregation. Functions by binding with its tail domain to receptor proteins on organelles and exerting force with its N-terminal motor domain against actin filaments, thereby transporting its cargo along polarized actin cables. This chain is Myosin-2B (MYO2B), found in Naumovozyma castellii (Yeast).